A 372-amino-acid chain; its full sequence is Protein phosphatase Mn(2+)-dependent 1K (372 aa).

A mitochondrion-targeting transit peptide spans 1 to 29 (MLSTAFITLVRSGRNQVKKRVLLSSILLQ). Positions 46-61 (RCSRFDPDGSGQPATW) are critical for association with the BCKDH complex. The PPM-type phosphatase domain occupies 94 to 346 (NVGCASLIGK…DNSTAVVVPF (253 aa)). Mn(2+)-binding residues include Asp-127 and Gly-128. A Phosphoserine modification is found at Ser-248. 2 residues coordinate Mn(2+): Asp-298 and Asp-337.

Belongs to the PP2C family. Interacts with E1 and E2 components of the branched-chain alpha-ketoacid dehydrogenase (BCKDH) complex. Interacts with both BCKDHA and BCKDHB chains of the E1 subunit. Interacts with the 24-meric DBT/E2 core of the BCKD complex with a 1:1 stoichiometry; the N-terminal region (residues 49-61) of PPM1K and C-terminal linker of the lipoyl domain of DBT/E2 (residues 145-160) are critical for this interaction whereas the lipoyl prosthetic group is dispensable. Competes with BCKDK for binding to DBT/E2; this interaction is modulated by branched-chain alpha-keto acids (BCKAs). At steady state, BCKDH holoenzyme preferentially binds BCKDK and BCKDHA/E1 is phosphorylated. In response to high levels of BCKAs, BCKDK is replaced by PPM1K leading to BCKDHA/E1 dephosphorylation. The cofactor is Mn(2+).

The protein resides in the mitochondrion matrix. The enzyme catalyses O-phospho-L-seryl-[3-methyl-2-oxobutanoate dehydrogenase] + H2O = L-seryl-[3-methyl-2-oxobutanoate dehydrogenase] + phosphate. It carries out the reaction O-phospho-L-seryl-[protein] + H2O = L-seryl-[protein] + phosphate. It participates in protein modification. Functionally, serine/threonine-protein phosphatase component of macronutrients metabolism. Together with BCKDK serves as a metabolic regulatory node that coordinates branched-chain amino acids (BCAAs) and protein synthesis with glucose and lipid metabolism via two distinct phosphoprotein targets: BCKDHA/E1a subunit of the branched-chain alpha-ketoacid dehydrogenase (BCKDH) complex and ACLY, a lipogenic enzyme of Krebs cycle. At high levels of branched-chain ketoacids (BCKAs), dephosphorylates and activates mitochondrial BCKDH complex, a multisubunit complex consisting of three components, heterotetrameric E1 composed of BCKDHA and BCKDHB chains, 24-meric E2 core composed of DBT and homodimeric E3 composed of DLD, each involved in different steps of BCAA catabolism. Tightly associates with the E2 subunit of BCKDH complex and dephosphorylates Ser-333 of BCKDHA chain of the E1 subunit likely through on-off binding to individual E2 subunits of the 24-meric E2 core to increase the efficiency of the dephosphorylation reaction. Appears to dephosphorylate and inactivate cytosolic ACLY in response to changes of cellular carbohydrate abundance. Overnutrition and in particular high-fructose diet, activates MLXIPL/ChREBP leading to increased BCKDK to PPM1K ratio, phosphorylation of ACLY on Ser-454 and activation of its enzymatic activity that ultimately results in the generation of acetyl-CoA and malonyl-CoA immediate substrates of de novo lipogenesis. Recognizes phosphosites having SxS or RxxS motifs and strictly depends on Mn(2+) ions for the phosphatase activity. Regulates Ca(2+)-induced opening of mitochondrial transition pore and apoptotic cell death. The protein is Protein phosphatase Mn(2+)-dependent 1K (Ppm1k) of Rattus norvegicus (Rat).